A 343-amino-acid polypeptide reads, in one-letter code: Mitotic checkpoint protein bub-3 (343 aa).

WD repeat units follow at residues Pro-21–Glu-62, Thr-67–Leu-105, Ser-107–Ile-146, Asn-150–Gln-187, Pro-192–Lys-232, Glu-249–Gln-288, and Lys-291–Thr-331. A disordered region spans residues Pro-322–Lys-343. Residues His-334–Lys-343 show a composition bias toward basic and acidic residues.

It belongs to the WD repeat BUB3 family. As to quaternary structure, may interact with bub-1; for localization at the kinetochore and the onset of anaphase.

It is found in the chromosome. The protein localises to the centromere. Its subcellular location is the kinetochore. It localises to the nucleus. Functionally, has a dual function in spindle-assembly checkpoint signaling and in promoting the establishment of correct kinetochore-microtubule (K-MT) attachments. Promotes the formation of stable end-on bipolar attachments of chromosomes. Necessary for expression and kinetochore localization of bub-1. Plays a role in synapsis checkpoint signaling inducing apoptosis in response to unsynapsed chromosomes and thus controlling chromosomal segregation during oocyte meiosis. This Caenorhabditis elegans protein is Mitotic checkpoint protein bub-3.